Here is a 346-residue protein sequence, read N- to C-terminus: Magnesium-chelatase 38 kDa subunit (346 aa).

An ATP-binding site is contributed by 34-41; it reads GHRGTGKS.

Belongs to the Mg-chelatase subunits D/I family.

The enzyme catalyses protoporphyrin IX + Mg(2+) + ATP + H2O = Mg-protoporphyrin IX + ADP + phosphate + 3 H(+). The protein operates within porphyrin-containing compound metabolism; bacteriochlorophyll biosynthesis. Its function is as follows. Involved in bacteriochlorophyll biosynthesis; introduces a magnesium ion into protoporphyrin IX to yield Mg-protoporphyrin IX. The chain is Magnesium-chelatase 38 kDa subunit (bchI) from Chlorobaculum parvum (strain DSM 263 / NCIMB 8327) (Chlorobium vibrioforme subsp. thiosulfatophilum).